A 204-amino-acid polypeptide reads, in one-letter code: Holliday junction branch migration complex subunit RuvA (204 aa).

The segment at 1 to 64 (MIAQIRGKLI…QDSILLVGFC (64 aa)) is domain I. Positions 65-143 (TENEKQLFKL…GWTSKEQITF (79 aa)) are domain II. The tract at residues 144-154 (INNKKDAIDQS) is flexible linker. A domain III region spans residues 154 to 204 (SVMEEDAISALINLGYKSQAAKDAIDRVISEGGENKSLDVILKKALKVLAM).

Belongs to the RuvA family. In terms of assembly, homotetramer. Forms an RuvA(8)-RuvB(12)-Holliday junction (HJ) complex. HJ DNA is sandwiched between 2 RuvA tetramers; dsDNA enters through RuvA and exits via RuvB. An RuvB hexamer assembles on each DNA strand where it exits the tetramer. Each RuvB hexamer is contacted by two RuvA subunits (via domain III) on 2 adjacent RuvB subunits; this complex drives branch migration. In the full resolvosome a probable DNA-RuvA(4)-RuvB(12)-RuvC(2) complex forms which resolves the HJ.

It is found in the cytoplasm. In terms of biological role, the RuvA-RuvB-RuvC complex processes Holliday junction (HJ) DNA during genetic recombination and DNA repair, while the RuvA-RuvB complex plays an important role in the rescue of blocked DNA replication forks via replication fork reversal (RFR). RuvA specifically binds to HJ cruciform DNA, conferring on it an open structure. The RuvB hexamer acts as an ATP-dependent pump, pulling dsDNA into and through the RuvAB complex. HJ branch migration allows RuvC to scan DNA until it finds its consensus sequence, where it cleaves and resolves the cruciform DNA. The protein is Holliday junction branch migration complex subunit RuvA of Syntrophus aciditrophicus (strain SB).